A 62-amino-acid polypeptide reads, in one-letter code: UPF0291 protein CLK_1994 (62 aa).

It belongs to the UPF0291 family.

Its subcellular location is the cytoplasm. In Clostridium botulinum (strain Loch Maree / Type A3), this protein is UPF0291 protein CLK_1994.